The following is a 135-amino-acid chain: Large ribosomal subunit protein bL17 (135 aa).

It belongs to the bacterial ribosomal protein bL17 family. As to quaternary structure, part of the 50S ribosomal subunit. Contacts protein L32.

In Listeria welshimeri serovar 6b (strain ATCC 35897 / DSM 20650 / CCUG 15529 / CIP 8149 / NCTC 11857 / SLCC 5334 / V8), this protein is Large ribosomal subunit protein bL17.